The chain runs to 238 residues: Probable amino-acid ABC transporter permease protein y4tF (238 aa).

In terms of domain architecture, ABC transmembrane type-1 spans 29-223; the sequence is AWVTIQFTLY…GIALVLSFFM (195 aa). 5 consecutive transmembrane segments (helical) span residues 33–53, 77–97, 103–123, 152–172, and 203–223; these read IQFT…FGIG, LLVQ…MMGI, PVVA…AEIV, VALP…AIAA, and TVYT…SFFM.

Belongs to the binding-protein-dependent transport system permease family. HisMQ subfamily.

The protein resides in the cell inner membrane. Probably part of the binding-protein-dependent transport system y4tEFGH for an amino acid. Probably responsible for the translocation of the substrate across the membrane. The chain is Probable amino-acid ABC transporter permease protein y4tF from Sinorhizobium fredii (strain NBRC 101917 / NGR234).